A 171-amino-acid chain; its full sequence is MTKQHAFTREDLLRCSRGELFGPGNAQLPAPNMLMIDRIVHISDVGGKYGKGELVAELDINPDLWFFACHFEGDPVMPGCLGLDAMWQLVGFYLGWQGNPGRGRALGSGEVKFFGQVLPTAKKVTYNIHIKRTINRSLVLAIADGTVSVDGREIYSAEGLRVGLFTSTDSF.

H70 is a catalytic residue.

The protein belongs to the thioester dehydratase family. FabA subfamily. Homodimer.

The protein localises to the cytoplasm. The enzyme catalyses a (3R)-hydroxyacyl-[ACP] = a (2E)-enoyl-[ACP] + H2O. It carries out the reaction (3R)-hydroxydecanoyl-[ACP] = (2E)-decenoyl-[ACP] + H2O. The catalysed reaction is (2E)-decenoyl-[ACP] = (3Z)-decenoyl-[ACP]. It functions in the pathway lipid metabolism; fatty acid biosynthesis. Its function is as follows. Necessary for the introduction of cis unsaturation into fatty acids. Catalyzes the dehydration of (3R)-3-hydroxydecanoyl-ACP to E-(2)-decenoyl-ACP and then its isomerization to Z-(3)-decenoyl-ACP. Can catalyze the dehydratase reaction for beta-hydroxyacyl-ACPs with saturated chain lengths up to 16:0, being most active on intermediate chain length. The sequence is that of 3-hydroxydecanoyl-[acyl-carrier-protein] dehydratase from Pseudomonas aeruginosa (strain LESB58).